Reading from the N-terminus, the 209-residue chain is MTRVVLASASKGRLGVLRQAGIDPQVIVSAVDEDTLLAALDPDLPPEAVVAKLATAKALSVAAELPDELLADCVVIGCDSMLFLDGTLRGKPGSAEAARAQWESMAGSAGHLLTGHALLRISGGVITHTEGDTGSTKVHFGKPAEDEITRYVDSGEPIHVAGAFTLNGLGGWFVDRIEGDPSNVIGLSLPLVHRLVRRTGLSISDLWQR.

The active-site Proton acceptor is the D79.

This sequence belongs to the Maf family. It depends on a divalent metal cation as a cofactor.

It is found in the cytoplasm. The catalysed reaction is a ribonucleoside 5'-triphosphate + H2O = a ribonucleoside 5'-phosphate + diphosphate + H(+). The enzyme catalyses a 2'-deoxyribonucleoside 5'-triphosphate + H2O = a 2'-deoxyribonucleoside 5'-phosphate + diphosphate + H(+). Nucleoside triphosphate pyrophosphatase. May have a dual role in cell division arrest and in preventing the incorporation of modified nucleotides into cellular nucleic acids. The polypeptide is Nucleoside triphosphate pyrophosphatase (Mycolicibacterium vanbaalenii (strain DSM 7251 / JCM 13017 / BCRC 16820 / KCTC 9966 / NRRL B-24157 / PYR-1) (Mycobacterium vanbaalenii)).